Consider the following 957-residue polypeptide: Glycine dehydrogenase (decarboxylating) (957 aa).

Position 708 is an N6-(pyridoxal phosphate)lysine (Lys708).

Belongs to the GcvP family. In terms of assembly, the glycine cleavage system is composed of four proteins: P, T, L and H. It depends on pyridoxal 5'-phosphate as a cofactor.

It carries out the reaction N(6)-[(R)-lipoyl]-L-lysyl-[glycine-cleavage complex H protein] + glycine + H(+) = N(6)-[(R)-S(8)-aminomethyldihydrolipoyl]-L-lysyl-[glycine-cleavage complex H protein] + CO2. In terms of biological role, the glycine cleavage system catalyzes the degradation of glycine. The P protein binds the alpha-amino group of glycine through its pyridoxal phosphate cofactor; CO(2) is released and the remaining methylamine moiety is then transferred to the lipoamide cofactor of the H protein. In Escherichia coli (strain K12 / MC4100 / BW2952), this protein is Glycine dehydrogenase (decarboxylating).